The primary structure comprises 1472 residues: Vacuolar cation-transporting ATPase YPK9 (1472 aa).

Position 1 is an N-acetylmethionine (Met1). Composition is skewed to polar residues over residues 1–12 and 72–87; these read MDIPSSNQIQHG and SFQS…SGNL. Disordered stretches follow at residues 1–32, 71–115, and 179–273; these read MDIP…TATT, HSFQ…SRNP, and AKSY…DDVH. The Cytoplasmic portion of the chain corresponds to 1–293; sequence MDIPSSNQIQ…YHEKFYPQYA (293 aa). Position 95 is a phosphothreonine (Thr95). 2 stretches are compositionally biased toward low complexity: residues 103–115 and 211–222; these read SSAE…SRNP and SATHSSSSLSRY. Ser108 carries the post-translational modification Phosphoserine. Acidic residues predominate over residues 234–243; the sequence is SQTDEILEDE. A helical membrane pass occupies residues 294-315; sequence PNLHYQRFYIAEEDLVIGIAAY. Topologically, residues 316–321 are vacuolar; sequence QTSKFW. Residues 322–344 traverse the membrane as a helical segment; sequence YIIYNLCCFLTFGLVYLLTRWLP. Topologically, residues 345-488 are cytoplasmic; the sequence is HLKVKLYGVK…INLRMKTTSE (144 aa). The helical transmembrane segment at 489–511 threads the bilayer; the sequence is ILFNEVLHPFYVFQVFSIILWGI. Over 512–514 the chain is Vacuolar; sequence DEY. The helical transmembrane segment at 515 to 533 threads the bilayer; that stretch reads YYYAACIFLISVLSIFDSL. The Cytoplasmic segment spans residues 534 to 693; that stretch reads NEQKKVSRNL…PTGFKFYRDS (160 aa). A helical membrane pass occupies residues 694–713; that stretch reads FKYIGFMSLIAIFGFCVSCV. At 714–726 the chain is on the vacuolar side; it reads QFIKLGLDKKTMI. Residues 727 to 748 traverse the membrane as a helical segment; it reads LRALDIITIVVPPALPATLTIG. At 749 to 1244 the chain is on the cytoplasmic side; that stretch reads TNFALSRLKE…ALVTSFACFQ (496 aa). Asp781 (4-aspartylphosphate intermediate) is an active-site residue. Phosphoserine occurs at positions 1117 and 1120. Positions 1187 and 1191 each coordinate Mg(2+). A helical membrane pass occupies residues 1245–1264; it reads YMSLYSAIQFITITILYSRG. The Vacuolar portion of the chain corresponds to 1265–1271; that stretch reads SNLGDFQ. The helical transmembrane segment at 1272-1289 threads the bilayer; that stretch reads FLYIDLLLIVPIAICMSW. The Cytoplasmic portion of the chain corresponds to 1290 to 1307; it reads SKSYEKIDKKRPSANLVS. The helical transmembrane segment at 1308–1331 threads the bilayer; sequence PKILVPLLISVFLVFLFQFIPWII. At 1332–1351 the chain is on the vacuolar side; the sequence is VQKMSWYIKPIVGGDDAVQS. Residues 1352–1374 traverse the membrane as a helical segment; that stretch reads SDNTVLFFVSNFQYILTAIVLSV. Over 1375–1387 the chain is Cytoplasmic; it reads GPPYREPMSKNFE. The chain crosses the membrane as a helical span at residues 1388–1407; it reads FIVDITVSIGASLLLMTLDT. At 1408 to 1423 the chain is on the vacuolar side; sequence ESYLGKMLQLTPISNS. A helical membrane pass occupies residues 1424-1446; it reads FTMFIIVWVILNYYAQLYIPPSI. At 1447 to 1472 the chain is on the cytoplasmic side; sequence KGWLKKKKSSKKYKLLIQEEMKLKEV.

Belongs to the cation transport ATPase (P-type) (TC 3.A.3) family. Type V subfamily.

The protein resides in the vacuole membrane. The enzyme catalyses ATP + H2O = ADP + phosphate + H(+). Vacuolar transporter which plays a role in sequestration of divalent heavy metal ions. The sequence is that of Vacuolar cation-transporting ATPase YPK9 (YPK9) from Saccharomyces cerevisiae (strain ATCC 204508 / S288c) (Baker's yeast).